We begin with the raw amino-acid sequence, 818 residues long: LPS-assembly protein LptD (818 aa).

An N-terminal signal peptide occupies residues 1 to 33 (MVNETMKHQFKFNPLATAIFTLLCSGSIQSSYA).

It belongs to the LptD family. Component of the lipopolysaccharide transport and assembly complex. Interacts with LptE and LptA.

The protein localises to the cell outer membrane. Its function is as follows. Together with LptE, is involved in the assembly of lipopolysaccharide (LPS) at the surface of the outer membrane. This is LPS-assembly protein LptD from Acinetobacter baumannii (strain ATCC 19606 / DSM 30007 / JCM 6841 / CCUG 19606 / CIP 70.34 / NBRC 109757 / NCIMB 12457 / NCTC 12156 / 81).